Here is a 306-residue protein sequence, read N- to C-terminus: Putative lipid kinase Sca_1050 (306 aa).

Residues 3–139 (QHFHRGILFY…FDVLKVNDTY (137 aa)) enclose the DAGKc domain. ATP contacts are provided by residues S44, 74-80 (GDGTVNE), and T101. Residues S220, D223, and E225 each contribute to the Mg(2+) site. E281 serves as the catalytic Proton acceptor.

This sequence belongs to the diacylglycerol/lipid kinase family. The cofactor is Mg(2+).

May catalyze the ATP-dependent phosphorylation of lipids other than diacylglycerol (DAG). The polypeptide is Putative lipid kinase Sca_1050 (Staphylococcus carnosus (strain TM300)).